A 100-amino-acid chain; its full sequence is Cysteine-rich venom protein VAR1 (100 aa).

The N-terminal stretch at 1–22 (MILLKLYLTLAAILCQSRGTTS) is a signal peptide. The SCP domain maps to 41–81 (NKHNDLRRTVDPPAKNMLKMSWDNIIAESAKRAALRCNQNE).

Belongs to the CRISP family. Contains 8 disulfide bonds. Expressed by the venom gland.

Its subcellular location is the secreted. Its function is as follows. Blocks ryanodine receptors, and potassium channels. In Varanus acanthurus (Ridge-tailed monitor), this protein is Cysteine-rich venom protein VAR1.